The chain runs to 335 residues: MEVINSNQIGVSFKGSGSYVPHQILTNHEISKKVDTSDEWIKSRTGISQRRISGLSENVSEMGYKAGLAAIEMAKWDIETIDLIILATSTPHDLFGSAPEIQSKLGANNAVAFDLTAACSGFLFAVITATQFLKAGSYRRAIVIGSDQLSSYVDWNDRRSCILFGDGAGALAIEATNEFDNLIGFSMRTDGQRGSFLNLPSQKNNDQIIDNINFSSGGFSTIAMNGQEVYKFAVREVPLIIDNLFKKTNFNSEKINWLLLHQANQRILDSVGDRLNISSEKILSNLSNYGNTSAATIPLMLDEAIRNKKIKENDIIATSGFGAGLSWGAALIRWG.

Catalysis depends on residues Cys-119 and His-261. The tract at residues 262–266 is ACP-binding; the sequence is QANQR. Asn-291 is a catalytic residue.

The protein belongs to the thiolase-like superfamily. FabH family. In terms of assembly, homodimer.

It is found in the cytoplasm. It catalyses the reaction malonyl-[ACP] + acetyl-CoA + H(+) = 3-oxobutanoyl-[ACP] + CO2 + CoA. The protein operates within lipid metabolism; fatty acid biosynthesis. Functionally, catalyzes the condensation reaction of fatty acid synthesis by the addition to an acyl acceptor of two carbons from malonyl-ACP. Catalyzes the first condensation reaction which initiates fatty acid synthesis and may therefore play a role in governing the total rate of fatty acid production. Possesses both acetoacetyl-ACP synthase and acetyl transacylase activities. Its substrate specificity determines the biosynthesis of branched-chain and/or straight-chain of fatty acids. In Prochlorococcus marinus (strain MIT 9515), this protein is Beta-ketoacyl-[acyl-carrier-protein] synthase III.